The sequence spans 113 residues: U11-theraphotoxin-Hhn1j (113 aa).

The first 21 residues, 1-21, serve as a signal peptide directing secretion; that stretch reads MNTVRVTFLLVFVLAVSLGQA. A propeptide spanning residues 22 to 74 is cleaved from the precursor; the sequence is DKDENRMEMQEKTEQGKSYLDFAENLLLQKLEELEAKLLEEDSEESRNSRQKR. Over residues 60-69 the composition is skewed to basic and acidic residues; sequence LEEDSEESRN. Residues 60 to 83 are disordered; the sequence is LEEDSEESRNSRQKRCIGEGVPCD. 3 cysteine pairs are disulfide-bonded: C75/C90, C82/C95, and C89/C110.

This sequence belongs to the neurotoxin 14 (magi-1) family. 01 (HNTX-16) subfamily. As to expression, expressed by the venom gland.

The protein localises to the secreted. In terms of biological role, probable ion channel inhibitor. This is U11-theraphotoxin-Hhn1j from Cyriopagopus hainanus (Chinese bird spider).